Here is a 132-residue protein sequence, read N- to C-terminus: Large-conductance mechanosensitive channel (132 aa).

3 helical membrane passes run 14–34 (VLDM…VDSL), 39–59 (INPI…AVTI), and 68–88 (IGNF…VFLI).

Belongs to the MscL family. As to quaternary structure, homopentamer.

It localises to the cell membrane. Channel that opens in response to stretch forces in the membrane lipid bilayer. May participate in the regulation of osmotic pressure changes within the cell. In Latilactobacillus sakei subsp. sakei (strain 23K) (Lactobacillus sakei subsp. sakei), this protein is Large-conductance mechanosensitive channel.